We begin with the raw amino-acid sequence, 365 residues long: Phosphoserine aminotransferase (365 aa).

R40 contacts L-glutamate. Residues 74-75 (AS), F99, T155, D177, and Q200 each bind pyridoxal 5'-phosphate. An N6-(pyridoxal phosphate)lysine modification is found at K201. Residue 241 to 242 (NT) participates in pyridoxal 5'-phosphate binding.

This sequence belongs to the class-V pyridoxal-phosphate-dependent aminotransferase family. SerC subfamily. Homodimer. The cofactor is pyridoxal 5'-phosphate.

It localises to the cytoplasm. It catalyses the reaction O-phospho-L-serine + 2-oxoglutarate = 3-phosphooxypyruvate + L-glutamate. It carries out the reaction 4-(phosphooxy)-L-threonine + 2-oxoglutarate = (R)-3-hydroxy-2-oxo-4-phosphooxybutanoate + L-glutamate. Its pathway is amino-acid biosynthesis; L-serine biosynthesis; L-serine from 3-phospho-D-glycerate: step 2/3. Its function is as follows. Catalyzes the reversible conversion of 3-phosphohydroxypyruvate to phosphoserine and of 3-hydroxy-2-oxo-4-phosphonooxybutanoate to phosphohydroxythreonine. The chain is Phosphoserine aminotransferase from Lactococcus lactis subsp. cremoris (strain SK11).